The chain runs to 425 residues: Putative nucleoside transporter YegT (425 aa).

At 1–8 (MKTTAKLS) the chain is on the periplasmic side. Residues 9-29 (FMMFVEWFIWGAWFVPLWLWL) traverse the membrane as a helical segment. Residues 30 to 38 (SKSGFSAGE) lie on the Cytoplasmic side of the membrane. Residues 39 to 59 (IGWSYACTAIAAILSPILVGS) traverse the membrane as a helical segment. At 60 to 63 (ITDR) the chain is on the periplasmic side. Residues 64 to 84 (FFSAQKVLAVLMFAGALLMYF) traverse the membrane as a helical segment. Topologically, residues 85-90 (AAQQTT) are cytoplasmic. Residues 91–111 (FAGFFPLLLAYSLTYMPTIAL) traverse the membrane as a helical segment. Residues 112–131 (TNSIAFANVPDVERDFPRIR) lie on the Periplasmic side of the membrane. A helical transmembrane segment spans residues 132–152 (VMGTIGWIASGLACGFLPQIL). The Cytoplasmic portion of the chain corresponds to 153–161 (GYADISPTN). Residues 162–182 (IPLLITAGSSALLGVFAFFLP) form a helical membrane-spanning segment. The Periplasmic portion of the chain corresponds to 183–210 (DTPPKSTGKMDIKVMLGLDALILLRDKN). The chain crosses the membrane as a helical span at residues 211–231 (FLVFFFCSFLFAMPLAFYYIF). At 232–244 (ANGYLTEVGMKNA) the chain is on the cytoplasmic side. Residues 245–265 (TGWMTLGQFSEIFFMLALPFF) traverse the membrane as a helical segment. Over 266–287 (TKRFGIKKVLLLGLVTAAIRYG) the chain is Periplasmic. The helical transmembrane segment at 288–308 (FFIYGSADEYFTYALLFLGIL) threads the bilayer. Residues 309–339 (LHGVSYDFYYVTAYIYVDKKAPVHMRTAAQG) lie on the Cytoplasmic side of the membrane. Residues 340–360 (LITLCCQGFGSLLGYRLGGVM) traverse the membrane as a helical segment. Residues 361–379 (MEKMFAYQEPVNGLTFNWS) lie on the Periplasmic side of the membrane. The chain crosses the membrane as a helical span at residues 380–400 (GMWTFGAVMIAIIAVLFMIFF). The Cytoplasmic segment spans residues 401–425 (RESDNEITAIKVDDRDIALTQGEVK).

This sequence belongs to the major facilitator superfamily. Nucleoside:H(+) symporter (NHS) (TC 2.A.1.10) family.

It is found in the cell inner membrane. Functionally, could be involved in nucleoside transport. The chain is Putative nucleoside transporter YegT (yegT) from Escherichia coli (strain K12).